Reading from the N-terminus, the 465-residue chain is Cysteine--tRNA ligase (465 aa).

Zn(2+) is bound at residue C30. Residues 32–42 carry the 'HIGH' region motif; the sequence is ITVYDYCHVGH. Residues C214, H239, and E243 each coordinate Zn(2+). The 'KMSKS' region signature appears at 271–275; it reads KMSKS. Position 274 (K274) interacts with ATP.

It belongs to the class-I aminoacyl-tRNA synthetase family. As to quaternary structure, monomer. Requires Zn(2+) as cofactor.

The protein localises to the cytoplasm. It carries out the reaction tRNA(Cys) + L-cysteine + ATP = L-cysteinyl-tRNA(Cys) + AMP + diphosphate. The sequence is that of Cysteine--tRNA ligase from Burkholderia orbicola (strain MC0-3).